The following is a 475-amino-acid chain: Ras-GEF domain-containing family member 1B-B (475 aa).

Residues 1–19 (MPQTTPYSSKFNPSAYSSS) show a composition bias toward polar residues. Residues 1–25 (MPQTTPYSSKFNPSAYSSSHSHRQP) form a disordered region. The N-terminal Ras-GEF domain occupies 36 to 166 (RDNKLVSGSL…LIQRLLRKLT (131 aa)). The Ras-GEF domain maps to 209 to 456 (DPFIFAQQLT…QLASYESEGP (248 aa)). Positions 452–475 (ESEGPENNLERDTRRSLRSSLSRM) are disordered.

Guanine nucleotide exchange factor (GEF) for Ras family proteins. The chain is Ras-GEF domain-containing family member 1B-B from Danio rerio (Zebrafish).